We begin with the raw amino-acid sequence, 800 residues long: Protocadherin beta-10 (800 aa).

The signal sequence occupies residues 1 to 26; it reads MAVRELCFPRQRQVLFLFLFWGVSLA. Residues 27–692 lie on the Extracellular side of the membrane; that stretch reads GSGFGRYSVT…AEADLLTVYL (666 aa). Cadherin domains are found at residues 35 to 133, 138 to 242, 247 to 347, 352 to 451, and 456 to 561; these read VTEE…APVF, TVLK…APQF, YETQ…PPEL, FSNS…APAF, and YTLF…SPFV. N-linked (GlcNAc...) asparagine glycosylation is found at N169 and N181. Residues N418 and N436 are each glycosylated (N-linked (GlcNAc...) asparagine). Residue N567 is glycosylated (N-linked (GlcNAc...) asparagine). The 104-residue stretch at 568-671 folds into the Cadherin 6 domain; that stretch reads GSAPCTELVP…LVDGFSQPYL (104 aa). A helical membrane pass occupies residues 693–713; it reads VVALASVSSLFLLSVLLFVAV. At 714–800 the chain is on the cytoplasmic side; sequence RLCRRSRAAS…FRNSFGFNIQ (87 aa).

The protein resides in the cell membrane. Its function is as follows. Potential calcium-dependent cell-adhesion protein. May be involved in the establishment and maintenance of specific neuronal connections in the brain. The protein is Protocadherin beta-10 (PCDHB10) of Homo sapiens (Human).